The chain runs to 286 residues: NADH-cytochrome b5 reductase 1 (286 aa).

A helical membrane pass occupies residues 6–26 (FILVIIGSVALAAGVKYVFTL). Positions 52 to 155 (QEYRKFQLKE…KGPKGKFNYQ (104 aa)) constitute an FAD-binding FR-type domain. FAD is bound by residues 135 to 150 (DNMF…GPKG) and 161 to 193 (SIGM…EISL).

The protein belongs to the flavoprotein pyridine nucleotide cytochrome reductase family. As to quaternary structure, monomer. FAD serves as cofactor.

It is found in the endoplasmic reticulum membrane. The protein localises to the mitochondrion outer membrane. It carries out the reaction 2 Fe(III)-[cytochrome b5] + NADH = 2 Fe(II)-[cytochrome b5] + NAD(+) + H(+). In terms of biological role, electron donor reductase for cytochrome b5. The cytochrome b5/NADH cytochrome b5 reductase electron transfer system supports the catalytic activity of several sterol biosynthetic enzymes. This is NADH-cytochrome b5 reductase 1 (cyb5r1) from Dictyostelium discoideum (Social amoeba).